The chain runs to 267 residues: Dihydropteroate synthase (267 aa).

The region spanning Met1–Lys251 is the Pterin-binding domain. Position 11 (Asn11) interacts with Mg(2+). (7,8-dihydropterin-6-yl)methyl diphosphate contacts are provided by residues Thr51, Asp84, Asn103, Asp167, Lys203, and Arg239–His241.

The protein belongs to the DHPS family. In terms of assembly, homodimer. Requires Mg(2+) as cofactor.

It carries out the reaction (7,8-dihydropterin-6-yl)methyl diphosphate + 4-aminobenzoate = 7,8-dihydropteroate + diphosphate. It participates in cofactor biosynthesis; tetrahydrofolate biosynthesis; 7,8-dihydrofolate from 2-amino-4-hydroxy-6-hydroxymethyl-7,8-dihydropteridine diphosphate and 4-aminobenzoate: step 1/2. Functionally, catalyzes the condensation of para-aminobenzoate (pABA) with 6-hydroxymethyl-7,8-dihydropterin diphosphate (DHPt-PP) to form 7,8-dihydropteroate (H2Pte), the immediate precursor of folate derivatives. The sequence is that of Dihydropteroate synthase (folP) from Staphylococcus aureus (strain MW2).